The following is an 893-amino-acid chain: NEDD4-binding protein 1 (893 aa).

A KH-like domain is found at 59–143 (QEAVHSAKEY…IQQFVKLFES (85 aa)). Residues 213-243 (EYTQSAATGPSSARDEVVVQEDSRNKARTPV) are disordered. Residues 214–223 (YTQSAATGPS) are compositionally biased toward polar residues. A compositionally biased stretch (basic and acidic residues) spans 225-237 (ARDEVVVQEDSRN). T241 bears the Phosphothreonine mark. Phosphoserine occurs at positions 257, 269, and 299. 3 disordered regions span residues 273–339 (DALS…DGKD), 394–433 (RDFP…QSHT), and 472–564 (IWGS…PPLP). Composition is skewed to polar residues over residues 405-433 (ASQS…QSHT) and 523-537 (GFQQ…NNTK). The span at 551–564 (QPKPNYPPLSPPLP) shows a compositional bias: pro residues. S560 is subject to Phosphoserine. One can recognise an RNase NYN domain in the interval 615-767 (LKHIVIDGSN…LGRNGPRLEE (153 aa)). The interval 793–820 (PGFRSPSTQVANNSHQPPPRIQTSSSPW) is disordered. The span at 797 to 820 (SPSTQVANNSHQPPPRIQTSSSPW) shows a compositional bias: polar residues. The coCUN stretch occupies residues 846–893 (RSSAETSELREALLKIFPDSEQKLKIDQILAAHPYMKDLNALSALVLD).

The protein belongs to the N4BP1 family. Interacts with NEDD4. Interacts with ITCH (via WW domain 2). In terms of processing, proteolytically cleaved by CASP8 downstream of TLR3 or TLR4, leading to its inactivation. Mainly cleaved at Asp-488 by CASP8. Cleaved by caspase-like protein MALT1, leading to its inactivation. Mono- and polyubiquitinated on the CoCUN region. Monoubiquitinated by NEDD4. Polyubiquitinated, leading to its degradation by the proteasome. Sumoylated with SUMO1, abrogating polyubiquitination and subsequent degradation. Desumoylated by SENP1, leading to accumulation in PML nuclear bodies.

The protein resides in the cytoplasm. Its subcellular location is the cytosol. It localises to the nucleus. The protein localises to the nucleolus. It is found in the PML body. Proteolytic cleavage by CASP8 or MALT1 leads to its inactivation. Potent suppressor of cytokine production that acts as a regulator of innate immune signaling and inflammation. Acts as a key negative regulator of select cytokine and chemokine responses elicited by TRIF-independent Toll-like receptors (TLRs), thereby limiting inflammatory cytokine responses to minor insults. In response to more threatening pathogens, cleaved by CASP8 downstream of TLR3 or TLR4, leading to its inactivation, thereby allowing production of inflammatory cytokines. Acts as a restriction factor against some viruses: restricts viral replication by binding to mRNA viruses and mediating their degradation via its ribonuclease activity. Also acts as an inhibitor of the E3 ubiquitin-protein ligase ITCH: acts by interacting with the second WW domain of ITCH, leading to compete with ITCH's substrates and impairing ubiquitination of substrates. In Mus musculus (Mouse), this protein is NEDD4-binding protein 1.